The following is a 106-amino-acid chain: NADH-quinone oxidoreductase subunit K (106 aa).

A run of 3 helical transmembrane segments spans residues 10–30, 34–54, and 67–87; these read VTYI…GVLI, IVII…VFVT, and IVFF…ALVI.

Belongs to the complex I subunit 4L family. In terms of assembly, NDH-1 is composed of 14 different subunits. Subunits NuoA, H, J, K, L, M, N constitute the membrane sector of the complex.

Its subcellular location is the cell inner membrane. It catalyses the reaction a quinone + NADH + 5 H(+)(in) = a quinol + NAD(+) + 4 H(+)(out). NDH-1 shuttles electrons from NADH, via FMN and iron-sulfur (Fe-S) centers, to quinones in the respiratory chain. The immediate electron acceptor for the enzyme in this species is believed to be ubiquinone. Couples the redox reaction to proton translocation (for every two electrons transferred, four hydrogen ions are translocated across the cytoplasmic membrane), and thus conserves the redox energy in a proton gradient. In Leptospira biflexa serovar Patoc (strain Patoc 1 / Ames), this protein is NADH-quinone oxidoreductase subunit K.